The sequence spans 176 residues: Acireductone dioxygenase (176 aa).

Fe(2+)-binding residues include His91, His93, Glu97, and His136. 4 residues coordinate Ni(2+): His91, His93, Glu97, and His136.

Belongs to the acireductone dioxygenase (ARD) family. As to quaternary structure, monomer. It depends on Fe(2+) as a cofactor. Ni(2+) serves as cofactor.

The catalysed reaction is 1,2-dihydroxy-5-(methylsulfanyl)pent-1-en-3-one + O2 = 3-(methylsulfanyl)propanoate + CO + formate + 2 H(+). It carries out the reaction 1,2-dihydroxy-5-(methylsulfanyl)pent-1-en-3-one + O2 = 4-methylsulfanyl-2-oxobutanoate + formate + 2 H(+). Its pathway is amino-acid biosynthesis; L-methionine biosynthesis via salvage pathway; L-methionine from S-methyl-5-thio-alpha-D-ribose 1-phosphate: step 5/6. Its function is as follows. Catalyzes 2 different reactions between oxygen and the acireductone 1,2-dihydroxy-3-keto-5-methylthiopentene (DHK-MTPene) depending upon the metal bound in the active site. Fe-containing acireductone dioxygenase (Fe-ARD) produces formate and 2-keto-4-methylthiobutyrate (KMTB), the alpha-ketoacid precursor of methionine in the methionine recycle pathway. Ni-containing acireductone dioxygenase (Ni-ARD) produces methylthiopropionate, carbon monoxide and formate, and does not lie on the methionine recycle pathway. This is Acireductone dioxygenase from Picosynechococcus sp. (strain ATCC 27264 / PCC 7002 / PR-6) (Agmenellum quadruplicatum).